Reading from the N-terminus, the 190-residue chain is Potassium-transporting ATPase KdpC subunit (190 aa).

Residues 13 to 33 (LLLILTLITGILYPIVTTGFA) form a helical membrane-spanning segment.

It belongs to the KdpC family. The system is composed of three essential subunits: KdpA, KdpB and KdpC.

It is found in the cell inner membrane. Part of the high-affinity ATP-driven potassium transport (or Kdp) system, which catalyzes the hydrolysis of ATP coupled with the electrogenic transport of potassium into the cytoplasm. This subunit acts as a catalytic chaperone that increases the ATP-binding affinity of the ATP-hydrolyzing subunit KdpB by the formation of a transient KdpB/KdpC/ATP ternary complex. The chain is Potassium-transporting ATPase KdpC subunit from Leptospira interrogans serogroup Icterohaemorrhagiae serovar copenhageni (strain Fiocruz L1-130).